The primary structure comprises 410 residues: Probable inactive allantoicase (410 aa).

Belongs to the allantoicase family.

Its function is as follows. The function of this enzyme is unclear as allantoicase activity is not known to exist in mammals. This chain is Probable inactive allantoicase (ALLC), found in Macaca fascicularis (Crab-eating macaque).